Here is a 366-residue protein sequence, read N- to C-terminus: Neutral protease 2 homolog BDBG_02110 (366 aa).

The first 19 residues, 1 to 19 (MQLSSVLLTAAGLLAPVYS), serve as a signal peptide directing secretion. Residues 23–184 (ISIGRRSEGL…RAKIHDHLAQ (162 aa)) constitute a propeptide that is removed on maturation. 2 N-linked (GlcNAc...) asparagine glycosylation sites follow: asparagine 123 and asparagine 192. Cysteine 272 and cysteine 290 are disulfide-bonded. Histidine 314 is a binding site for Zn(2+). Residue glutamate 315 is part of the active site. Histidine 318 lines the Zn(2+) pocket.

Belongs to the peptidase M35 family. The cofactor is Zn(2+).

The protein localises to the secreted. It carries out the reaction Preferential cleavage of bonds with hydrophobic residues in P1'. Also 3-Asn-|-Gln-4 and 8-Gly-|-Ser-9 bonds in insulin B chain.. In terms of biological role, secreted metalloproteinase that allows assimilation of proteinaceous substrates. Shows high activities on basic nuclear substrates such as histone and protamine. In Blastomyces gilchristii (strain SLH14081) (Blastomyces dermatitidis), this protein is Neutral protease 2 homolog BDBG_02110.